A 62-amino-acid polypeptide reads, in one-letter code: MAKVCYFTGRKTVSGNNRSHAMNQTKRTVKPNLQKVTILVDGKPKKVWASARALKSGKVERI.

The protein belongs to the bacterial ribosomal protein bL28 family.

This is Large ribosomal subunit protein bL28 from Streptococcus equi subsp. equi (strain 4047).